The chain runs to 97 residues: Putative septation protein SpoVG (97 aa).

It belongs to the SpoVG family.

Its function is as follows. Could be involved in septation. The protein is Putative septation protein SpoVG of Borreliella afzelii (strain PKo) (Borrelia afzelii).